The primary structure comprises 334 residues: 4-hydroxyproline 2-epimerase (334 aa).

The active-site Proton acceptor is cysteine 91. Residues 92–93 (GH), histidine 224, and aspartate 250 contribute to the substrate site. Catalysis depends on cysteine 254, which acts as the Proton donor. 255 to 256 (GT) lines the substrate pocket.

Belongs to the proline racemase family.

The enzyme catalyses trans-4-hydroxy-L-proline = cis-4-hydroxy-D-proline. Functionally, catalyzes the epimerization of trans-4-hydroxy-L-proline (t4LHyp) to cis-4-hydroxy-D-proline (c4DHyp). Is likely involved in a degradation pathway that converts t4LHyp to alpha-ketoglutarate. Displays no proline racemase activity. This Spirosoma linguale (strain ATCC 33905 / DSM 74 / LMG 10896 / Claus 1) protein is 4-hydroxyproline 2-epimerase.